Reading from the N-terminus, the 196-residue chain is Mediator of RNA polymerase II transcription subunit 21 (196 aa).

The disordered stretch occupies residues 52-111 (KIPKNASTPPVPASAPQAAQSQSQASPPPPDTANPQTGGQHADQQQQSPDGEGLPAPDSP). 2 stretches are compositionally biased toward low complexity: residues 65 to 76 (SAPQAAQSQSQA) and 87 to 98 (QTGGQHADQQQQ). Residues 144 to 174 (SSEAEQERRIRELEGELRIVEGVREERRREL) are a coiled coil.

Belongs to the Mediator complex subunit 21 family. As to quaternary structure, component of the Mediator complex.

Its subcellular location is the nucleus. Functionally, component of the Mediator complex, a coactivator involved in the regulated transcription of nearly all RNA polymerase II-dependent genes. Mediator functions as a bridge to convey information from gene-specific regulatory proteins to the basal RNA polymerase II transcription machinery. Mediator is recruited to promoters by direct interactions with regulatory proteins and serves as a scaffold for the assembly of a functional preinitiation complex with RNA polymerase II and the general transcription factors. The protein is Mediator of RNA polymerase II transcription subunit 21 (srb7) of Aspergillus niger (strain ATCC MYA-4892 / CBS 513.88 / FGSC A1513).